A 167-amino-acid polypeptide reads, in one-letter code: Lipoprotein signal peptidase (167 aa).

A run of 4 helical transmembrane segments spans residues 8 to 28 (TFLT…VVLL), 46 to 66 (WGHF…FGLF), 68 to 88 (QYKI…ALFL), and 101 to 121 (IALT…LLHG). Active-site residues include D125 and D143. A helical transmembrane segment spans residues 139 to 159 (FNLADAFISIGTLLLIGHLYF).

This sequence belongs to the peptidase A8 family.

It is found in the cell inner membrane. It catalyses the reaction Release of signal peptides from bacterial membrane prolipoproteins. Hydrolyzes -Xaa-Yaa-Zaa-|-(S,diacylglyceryl)Cys-, in which Xaa is hydrophobic (preferably Leu), and Yaa (Ala or Ser) and Zaa (Gly or Ala) have small, neutral side chains.. It participates in protein modification; lipoprotein biosynthesis (signal peptide cleavage). In terms of biological role, this protein specifically catalyzes the removal of signal peptides from prolipoproteins. The polypeptide is Lipoprotein signal peptidase (Chlamydia trachomatis serovar L2b (strain UCH-1/proctitis)).